The following is a 1036-amino-acid chain: Hexagonally packed intermediate-layer surface protein (1036 aa).

The signal sequence occupies residues 1 to 17 (MKKNIALMALTGVLTLA). 3 disulfides stabilise this stretch: cysteine 74-cysteine 86, cysteine 256-cysteine 275, and cysteine 642-cysteine 754.

Post-translationally, glycosylated; contains six glycans. In terms of processing, acylated in the N-terminal region. The N-terminus is blocked.

It is found in the secreted. The protein localises to the cell wall. Its subcellular location is the S-layer. Shape maintenance, possible protection from noxious enzymes or exogenous and unsettling DNA, and may mediate homotypic cell-cell contacts. This is Hexagonally packed intermediate-layer surface protein (hpi) from Deinococcus radiodurans.